Here is a 236-residue protein sequence, read N- to C-terminus: 2,3,4,5-tetrahydropyridine-2,6-dicarboxylate N-acetyltransferase (236 aa).

The protein belongs to the transferase hexapeptide repeat family. DapH subfamily.

The enzyme catalyses (S)-2,3,4,5-tetrahydrodipicolinate + acetyl-CoA + H2O = L-2-acetamido-6-oxoheptanedioate + CoA. It participates in amino-acid biosynthesis; L-lysine biosynthesis via DAP pathway; LL-2,6-diaminopimelate from (S)-tetrahydrodipicolinate (acetylase route): step 1/3. Functionally, catalyzes the transfer of an acetyl group from acetyl-CoA to tetrahydrodipicolinate. This chain is 2,3,4,5-tetrahydropyridine-2,6-dicarboxylate N-acetyltransferase, found in Lactiplantibacillus plantarum (strain ATCC BAA-793 / NCIMB 8826 / WCFS1) (Lactobacillus plantarum).